Reading from the N-terminus, the 336-residue chain is Holliday junction branch migration complex subunit RuvB (336 aa).

The tract at residues 1 to 182 (MKERIVNLET…FGMSFRMQFY (182 aa)) is large ATPase domain (RuvB-L). Residues Leu-21, Arg-22, Gly-63, Lys-66, Thr-67, Ser-68, 129–131 (EDF), Arg-172, Tyr-182, and Arg-219 contribute to the ATP site. Thr-67 is a binding site for Mg(2+). The tract at residues 183–253 (SPSELSLIIK…ITLHALNELG (71 aa)) is small ATPAse domain (RuvB-S). Residues 256–336 (ELGFDEADLA…IPTLNPQTLF (81 aa)) are head domain (RuvB-H). Arg-310 and Arg-315 together coordinate DNA.

The protein belongs to the RuvB family. Homohexamer. Forms an RuvA(8)-RuvB(12)-Holliday junction (HJ) complex. HJ DNA is sandwiched between 2 RuvA tetramers; dsDNA enters through RuvA and exits via RuvB. An RuvB hexamer assembles on each DNA strand where it exits the tetramer. Each RuvB hexamer is contacted by two RuvA subunits (via domain III) on 2 adjacent RuvB subunits; this complex drives branch migration. In the full resolvosome a probable DNA-RuvA(4)-RuvB(12)-RuvC(2) complex forms which resolves the HJ.

The protein localises to the cytoplasm. It catalyses the reaction ATP + H2O = ADP + phosphate + H(+). The RuvA-RuvB-RuvC complex processes Holliday junction (HJ) DNA during genetic recombination and DNA repair, while the RuvA-RuvB complex plays an important role in the rescue of blocked DNA replication forks via replication fork reversal (RFR). RuvA specifically binds to HJ cruciform DNA, conferring on it an open structure. The RuvB hexamer acts as an ATP-dependent pump, pulling dsDNA into and through the RuvAB complex. RuvB forms 2 homohexamers on either side of HJ DNA bound by 1 or 2 RuvA tetramers; 4 subunits per hexamer contact DNA at a time. Coordinated motions by a converter formed by DNA-disengaged RuvB subunits stimulates ATP hydrolysis and nucleotide exchange. Immobilization of the converter enables RuvB to convert the ATP-contained energy into a lever motion, pulling 2 nucleotides of DNA out of the RuvA tetramer per ATP hydrolyzed, thus driving DNA branch migration. The RuvB motors rotate together with the DNA substrate, which together with the progressing nucleotide cycle form the mechanistic basis for DNA recombination by continuous HJ branch migration. Branch migration allows RuvC to scan DNA until it finds its consensus sequence, where it cleaves and resolves cruciform DNA. The protein is Holliday junction branch migration complex subunit RuvB of Helicobacter pylori (strain J99 / ATCC 700824) (Campylobacter pylori J99).